Consider the following 44-residue polypeptide: F420-non-reducing hydrogenase vhu subunit U (44 aa).

The Ni(2+) site is built by Sec20 and Cys23. A non-standard amino acid (selenocysteine) is located at residue Sec20. Positions 27-44 are cleaved as a propeptide — removed in mature form; that stretch reads MIVEDAEGNVVFEIVNDE.

Belongs to the [NiFe]/[NiFeSe] hydrogenase large subunit family. The F420-non-reducing hydrogenase vhu is composed of four subunits; VhuA, VhuD, VhuG and VhuU. Ni(2+) serves as cofactor.

In Methanococcus voltae, this protein is F420-non-reducing hydrogenase vhu subunit U (vhuU).